The primary structure comprises 348 residues: Ferredoxin--NADP reductase (348 aa).

8 residues coordinate FAD: threonine 26, glutamate 45, glutamine 53, tyrosine 58, alanine 98, phenylalanine 133, aspartate 299, and serine 340.

The protein belongs to the ferredoxin--NADP reductase type 2 family. As to quaternary structure, homodimer. Requires FAD as cofactor.

The catalysed reaction is 2 reduced [2Fe-2S]-[ferredoxin] + NADP(+) + H(+) = 2 oxidized [2Fe-2S]-[ferredoxin] + NADPH. The chain is Ferredoxin--NADP reductase from Prosthecochloris aestuarii (strain DSM 271 / SK 413).